The sequence spans 633 residues: Threonine--tRNA ligase (633 aa).

Residues 1–61 (MPAIRLPDGS…DHDVDLAIVT (61 aa)) form the TGS domain. Positions 242 to 533 (DHRKLGRQLD…LIEHHAGAMP (292 aa)) are catalytic. Zn(2+) contacts are provided by cysteine 333, histidine 384, and histidine 510.

The protein belongs to the class-II aminoacyl-tRNA synthetase family. Homodimer. Zn(2+) is required as a cofactor.

The protein resides in the cytoplasm. The enzyme catalyses tRNA(Thr) + L-threonine + ATP = L-threonyl-tRNA(Thr) + AMP + diphosphate + H(+). Catalyzes the attachment of threonine to tRNA(Thr) in a two-step reaction: L-threonine is first activated by ATP to form Thr-AMP and then transferred to the acceptor end of tRNA(Thr). Also edits incorrectly charged L-seryl-tRNA(Thr). This is Threonine--tRNA ligase from Laribacter hongkongensis (strain HLHK9).